The following is a 266-amino-acid chain: 3-methyl-2-oxobutanoate hydroxymethyltransferase 2 (266 aa).

Residues aspartate 45 and aspartate 84 each contribute to the Mg(2+) site. 3-methyl-2-oxobutanoate contacts are provided by residues 45 to 46, aspartate 84, and lysine 112; that span reads DS. A Mg(2+)-binding site is contributed by glutamate 114. The active-site Proton acceptor is glutamate 181.

Belongs to the PanB family. Homodecamer; pentamer of dimers. It depends on Mg(2+) as a cofactor.

Its subcellular location is the cytoplasm. It carries out the reaction 3-methyl-2-oxobutanoate + (6R)-5,10-methylene-5,6,7,8-tetrahydrofolate + H2O = 2-dehydropantoate + (6S)-5,6,7,8-tetrahydrofolate. It functions in the pathway cofactor biosynthesis; (R)-pantothenate biosynthesis; (R)-pantoate from 3-methyl-2-oxobutanoate: step 1/2. Catalyzes the reversible reaction in which hydroxymethyl group from 5,10-methylenetetrahydrofolate is transferred onto alpha-ketoisovalerate to form ketopantoate. The polypeptide is 3-methyl-2-oxobutanoate hydroxymethyltransferase 2 (Pseudomonas entomophila (strain L48)).